The primary structure comprises 503 residues: Aromatase (503 aa).

A helical membrane pass occupies residues 21-41 (VTVSAMPLLLIMGLLLLIWNC). Residues Asp309 and Met374 each contribute to the substrate site. Cys437 lines the heme pocket.

The protein belongs to the cytochrome P450 family. Heme serves as cofactor.

It is found in the endoplasmic reticulum membrane. Its subcellular location is the microsome membrane. It catalyses the reaction testosterone + 3 reduced [NADPH--hemoprotein reductase] + 3 O2 = 17beta-estradiol + formate + 3 oxidized [NADPH--hemoprotein reductase] + 4 H2O + 4 H(+). The enzyme catalyses androst-4-ene-3,17-dione + 3 reduced [NADPH--hemoprotein reductase] + 3 O2 = estrone + formate + 3 oxidized [NADPH--hemoprotein reductase] + 4 H2O + 4 H(+). The catalysed reaction is androst-4-ene-3,17-dione + reduced [NADPH--hemoprotein reductase] + O2 = 19-hydroxyandrost-4-ene-3,17-dione + oxidized [NADPH--hemoprotein reductase] + H2O + H(+). It carries out the reaction 19-hydroxyandrost-4-ene-3,17-dione + reduced [NADPH--hemoprotein reductase] + O2 = 19-oxo-androst-4-ene-3,17-dione + oxidized [NADPH--hemoprotein reductase] + 2 H2O + H(+). It catalyses the reaction 19-oxo-androst-4-ene-3,17-dione + reduced [NADPH--hemoprotein reductase] + O2 = estrone + formate + oxidized [NADPH--hemoprotein reductase] + H2O + 2 H(+). The enzyme catalyses estrone + reduced [NADPH--hemoprotein reductase] + O2 = 2-hydroxyestrone + oxidized [NADPH--hemoprotein reductase] + H2O + H(+). The catalysed reaction is 17beta-hydroxy-5alpha-androstan-3-one + reduced [NADPH--hemoprotein reductase] + O2 = 17beta,19-dihydroxy-3-oxo-5alpha-androstanone + oxidized [NADPH--hemoprotein reductase] + H2O + H(+). It carries out the reaction 17beta,19-dihydroxy-3-oxo-5alpha-androstanone + reduced [NADPH--hemoprotein reductase] + O2 = 17beta-hydroxy-3,19-dioxo-5alpha-androstanone + oxidized [NADPH--hemoprotein reductase] + 2 H2O + H(+). It catalyses the reaction 17beta-hydroxy-3,19-dioxo-5alpha-androstanone + reduced [NADPH--hemoprotein reductase] + O2 = 17beta-hydroxy-3-oxo-19-nor-5alpha-androst-1-ene + formate + oxidized [NADPH--hemoprotein reductase] + H2O + 2 H(+). It functions in the pathway steroid hormone biosynthesis. Its function is as follows. A cytochrome P450 monooxygenase that catalyzes the conversion of C19 androgens, androst-4-ene-3,17-dione (androstenedione) and testosterone to the C18 estrogens, estrone and estradiol, respectively. Catalyzes three successive oxidations of C19 androgens: two conventional oxidations at C19 yielding 19-hydroxy and 19-oxo/19-aldehyde derivatives, followed by a third oxidative aromatization step that involves C1-beta hydrogen abstraction combined with cleavage of the C10-C19 bond to yield a phenolic A ring and formic acid. Alternatively, the third oxidative reaction yields a 19-norsteroid and formic acid. Converts dihydrotestosterone to delta1,10-dehydro 19-nordihydrotestosterone and may play a role in homeostasis of this potent androgen. Also displays 2-hydroxylase activity toward estrone. Mechanistically, uses molecular oxygen inserting one oxygen atom into a substrate, and reducing the second into a water molecule, with two electrons provided by NADPH via cytochrome P450 reductase (CPR; NADPH-ferrihemoprotein reductase). The chain is Aromatase (Cyp19a1) from Mus musculus (Mouse).